Consider the following 972-residue polypeptide: Protein NRDE2 homolog (972 aa).

Over residues 1 to 17 (MPSNHNTSVPKFSSFNS) the composition is skewed to polar residues. A disordered region spans residues 1-61 (MPSNHNTSVP…RSIQSNFAVD (61 aa)). Residues 19 to 33 (KAKKNPITKSNKKYR) show a composition bias toward basic residues. Residues 37 to 59 (DQVSSNHAKSSFPSHRSIQSNFA) show a composition bias toward polar residues. HAT repeat units lie at residues 159 to 191 (LNIL…YQER), 250 to 282 (WSKE…YFTG), 318 to 350 (TDVT…YELA), 355 to 386 (QANM…FWNS), 608 to 640 (EEKP…LEHL), 788 to 820 (YNLP…FESK), and 860 to 894 (TNSQ…ILNL). Ser-970 is modified (phosphoserine).

It belongs to the NRDE2 family.

It localises to the nucleus. In Schizosaccharomyces pombe (strain 972 / ATCC 24843) (Fission yeast), this protein is Protein NRDE2 homolog.